The following is a 560-amino-acid chain: Glycolate permease GlcA (560 aa).

At Met-1–Gly-13 the chain is on the cytoplasmic side. The chain crosses the membrane as a helical span at residues Leu-14 to Val-34. At Leu-35–Val-41 the chain is on the periplasmic side. Residues Ala-42 to Ile-62 form a helical membrane-spanning segment. Residues Asp-63 to Ala-69 are Cytoplasmic-facing. The chain crosses the membrane as a helical span at residues Gly-70 to Leu-90. Topologically, residues Tyr-91–Glu-130 are periplasmic. The chain crosses the membrane as a helical span at residues Gly-131–Phe-151. At Lys-152 to Gly-158 the chain is on the cytoplasmic side. A helical transmembrane segment spans residues Leu-159 to Val-179. Over Ala-180–Leu-199 the chain is Periplasmic. The chain crosses the membrane as a helical span at residues Pro-200–Val-220. Residues Lys-221–Pro-225 lie on the Cytoplasmic side of the membrane. The helical transmembrane segment at Ala-226 to Gly-246 threads the bilayer. At Pro-247–Glu-248 the chain is on the periplasmic side. Residues Leu-249–Trp-269 form a helical membrane-spanning segment. Over Arg-270–Pro-313 the chain is Cytoplasmic. A helical membrane pass occupies residues Phe-314–Ala-334. Residues Pro-335–Ser-378 are Periplasmic-facing. The chain crosses the membrane as a helical span at residues Ala-379 to Ile-399. Topologically, residues Lys-400–Glu-408 are cytoplasmic. A helical transmembrane segment spans residues Thr-409 to Val-429. Residues Thr-430–Thr-438 are Periplasmic-facing. A helical membrane pass occupies residues Leu-439–Trp-459. The Cytoplasmic segment spans residues Leu-460–Ser-536. A helical membrane pass occupies residues Leu-537–Met-557. Over Leu-558 to Ser-560 the chain is Periplasmic.

Belongs to the lactate permease family.

Its subcellular location is the cell inner membrane. The enzyme catalyses glycolate(in) + H(+)(in) = glycolate(out) + H(+)(out). It catalyses the reaction (S)-lactate(in) + H(+)(in) = (S)-lactate(out) + H(+)(out). The catalysed reaction is (R)-lactate(in) + H(+)(in) = (R)-lactate(out) + H(+)(out). With respect to regulation, inhibited by the proton ionophore carbonyl cyanide m-chlorophenylhydrazone (CCCP). Its function is as follows. Uptake of glycolate across the membrane. Can also transport L-lactate and D-lactate. Seems to be driven by a proton motive force. The polypeptide is Glycolate permease GlcA (Escherichia coli (strain K12)).